Consider the following 535-residue polypeptide: Zinc transporter ZIP5 (535 aa).

Residues 1 to 19 (MGPPVHHLLTGLCVGVALG) form the signal peptide. Over 20–210 (WVGGSVPNLG…PAPPGDVLSA (191 aa)) the chain is Extracellular. N-linked (GlcNAc...) asparagine glycosylation is found at Asn49 and Asn158. Residues 211–231 (LLHSGLAVLFLSLPAPLSLLL) traverse the membrane as a helical segment. The Cytoplasmic portion of the chain corresponds to 232-242 (LRLLGPRLLRP). The chain crosses the membrane as a helical span at residues 243–263 (VLGFLGALAVGTLCGDALLHL). Over 264 to 285 (LPHAQGGRHTGPSEQSEEDLGP) the chain is Extracellular. Residues 286 to 306 (GLSVLGGLFLLFMLENTLGLV) traverse the membrane as a helical segment. The Cytoplasmic portion of the chain corresponds to 307-439 (RHRGLRPRCC…LLQEGLSFRK (133 aa)). The tract at residues 316–373 (CRNKRDLGEPNPDPEDGSGMVLRPLQAASEPEVQGQRENRQSSPSLAPPGHQGHSHEH) is disordered. Position 333 is a phosphoserine (Ser333). Position 371 is a pros-methylhistidine (His371). The chain crosses the membrane as a helical span at residues 440–460 (LLLLSLVSGALGLGGAALGVG). The Extracellular portion of the chain corresponds to 461–465 (LSLGP). The helical transmembrane segment at 466 to 486 (VPLTPWVFGTTAGVFLYVALV) threads the bilayer. Residues 487-503 (DMLPTLLRPPEPLPVFH) are Cytoplasmic-facing. Residues 504 to 524 (VLLQGLGLLLGGSLMFTIALL) form a helical membrane-spanning segment. The Extracellular segment spans residues 525–535 (EEQLVPTVPDG).

Belongs to the ZIP transporter (TC 2.A.5) family. In terms of assembly, homodimer. N-Glycosylated. Post-translationally, methylated at His-371 by METTL9. As to expression, expressed in all stages of eye development and primarily in the sclera and several layers of the retina, including the inner segment, outer plexiform layer and ganglion cell layer. Expressed in pancreas, kidney and the proximal and distal small intestine as well as in the embryonic visceral yolk sac. In the proximal intestine, expression is predominant in the crypts but diminishes toward the apical regions of the villi.

It is found in the basolateral cell membrane. The catalysed reaction is Zn(2+)(in) = Zn(2+)(out). Its function is as follows. Uniporter that transports zinc(2+) into polarized cells of enterocytes, pancreatic acinar and endoderm cells across the basolateral membrane and participates, notably, in zinc excretion from the intestine by the uptake of zinc from the blood into the intestine. The transport mechanism is temperature- and concentration-dependent and saturable. In addition, is also a high affinity copper transporter in vitro. Also may regulate glucose-stimulated insulin secretion (GSIS) in islets primarily through the zinc-activated SIRT1-PPARGC1A axis. Could regulate the BMP/TGF-beta (bone morphogenetic protein/transforming growth factor-beta) signaling pathway and modulates extracellular matrix (ECM) proteins of the sclera. Plays a role in eye development. The polypeptide is Zinc transporter ZIP5 (Mus musculus (Mouse)).